Here is a 662-residue protein sequence, read N- to C-terminus: Translation factor guf1, mitochondrial (662 aa).

The N-terminal 42 residues, 1 to 42 (MRGCLQLARWLSAAPNWPASSLLKAPGSSFATRLFTTTSSYK), are a transit peptide targeting the mitochondrion. Residues 64 to 244 (ERYRNFCIVA…TVVEKIPAPI (181 aa)) form the tr-type G domain. GTP-binding positions include 73-80 (AHVDHGKS), 137-141 (DTPGH), and 191-194 (NKVD).

This sequence belongs to the TRAFAC class translation factor GTPase superfamily. Classic translation factor GTPase family. LepA subfamily.

Its subcellular location is the mitochondrion inner membrane. It carries out the reaction GTP + H2O = GDP + phosphate + H(+). Its function is as follows. Promotes mitochondrial protein synthesis. May act as a fidelity factor of the translation reaction, by catalyzing a one-codon backward translocation of tRNAs on improperly translocated ribosomes. Binds to mitochondrial ribosomes in a GTP-dependent manner. The protein is Translation factor guf1, mitochondrial (guf1) of Emericella nidulans (strain FGSC A4 / ATCC 38163 / CBS 112.46 / NRRL 194 / M139) (Aspergillus nidulans).